A 72-amino-acid polypeptide reads, in one-letter code: Translation initiation factor IF-1 (72 aa).

An S1-like domain is found at M1–K72.

It belongs to the IF-1 family. In terms of assembly, component of the 30S ribosomal translation pre-initiation complex which assembles on the 30S ribosome in the order IF-2 and IF-3, IF-1 and N-formylmethionyl-tRNA(fMet); mRNA recruitment can occur at any time during PIC assembly.

It localises to the cytoplasm. In terms of biological role, one of the essential components for the initiation of protein synthesis. Stabilizes the binding of IF-2 and IF-3 on the 30S subunit to which N-formylmethionyl-tRNA(fMet) subsequently binds. Helps modulate mRNA selection, yielding the 30S pre-initiation complex (PIC). Upon addition of the 50S ribosomal subunit IF-1, IF-2 and IF-3 are released leaving the mature 70S translation initiation complex. The chain is Translation initiation factor IF-1 from Nitratiruptor sp. (strain SB155-2).